The sequence spans 318 residues: MFMINLLLMIVPILLAVAFLTLVERKVLGYMQLRKGPNVVGPYGLLQPIADAIKLFTKEPLRPLTSSISMFIIAPILALALALTMWTPLPMPYPLINMNLGVLFMLAMSSLAVYSILWSGWASNSKYALIGALRAVAQTISYEVTLAIILLSVLLLNGSFTLPTLITTQEHMWLIIPSWPLAMMWFISTLAETNRAPFDLTEGESELVSGFNVEYAGGPFALFFLAEYANIIMMNIFTTILFLGAFHNPLMPELYTINFVTKSMLLTISFLWVRASYPRFRYDQLMHLLWKNFLPLTLALCMWHVTMPIITAGVPPLT.

The next 8 membrane-spanning stretches (helical) occupy residues 2-22 (FMINLLLMIVPILLAVAFLTL), 68-88 (ISMFIIAPILALALALTMWTP), 100-120 (LGVLFMLAMSSLAVYSILWSG), 146-166 (LAIILLSVLLLNGSFTLPTLI), 171-191 (HMWLIIPSWPLAMMWFISTLA), 222-242 (LFFLAEYANIIMMNIFTTILF), 253-273 (ELYTINFVTKSMLLTISFLWV), and 293-313 (FLPLTLALCMWHVTMPIITAG).

It belongs to the complex I subunit 1 family. Core subunit of respiratory chain NADH dehydrogenase (Complex I) which is composed of 45 different subunits.

The protein localises to the mitochondrion inner membrane. The enzyme catalyses a ubiquinone + NADH + 5 H(+)(in) = a ubiquinol + NAD(+) + 4 H(+)(out). Functionally, core subunit of the mitochondrial membrane respiratory chain NADH dehydrogenase (Complex I) which catalyzes electron transfer from NADH through the respiratory chain, using ubiquinone as an electron acceptor. Essential for the catalytic activity and assembly of complex I. This chain is NADH-ubiquinone oxidoreductase chain 1 (MT-ND1), found in Hipposideros diadema (Diadem leaf-nosed bat).